The following is a 208-amino-acid chain: Uridine kinase (208 aa).

Position 12 to 19 (12 to 19 (GGSGGGKT)) interacts with ATP.

It belongs to the uridine kinase family.

It localises to the cytoplasm. It catalyses the reaction uridine + ATP = UMP + ADP + H(+). The enzyme catalyses cytidine + ATP = CMP + ADP + H(+). Its pathway is pyrimidine metabolism; CTP biosynthesis via salvage pathway; CTP from cytidine: step 1/3. The protein operates within pyrimidine metabolism; UMP biosynthesis via salvage pathway; UMP from uridine: step 1/1. The polypeptide is Uridine kinase (Streptococcus pyogenes serotype M18 (strain MGAS8232)).